A 189-amino-acid chain; its full sequence is Casparian strip membrane protein 1 (189 aa).

Residues 1 to 42 are Cytoplasmic-facing; it reads MEKNESSAIEIAESSKERKGKAPLLAAAVGHDRAAGYKRGVS. The chain crosses the membrane as a helical span at residues 43 to 63; it reads IFDLILRISAATAALAATIVM. Over 64–90 the chain is Extracellular; sequence GTTEQTLPFFTQFFQFRAQYDDLPTFT. A helical membrane pass occupies residues 91–111; sequence FFVVGMAIVTGYLILSVPLSI. Topologically, residues 112-130 are cytoplasmic; sequence VCIARPVAIGPRFLLIVCD. Residues 131–151 form a helical membrane-spanning segment; that stretch reads TVTAVLATSAAGSSAAIVYLA. The Extracellular portion of the chain corresponds to 152 to 189; the sequence is HNGNSDANWLAICQQFNDFCQRVSGAVVAAFVAVVCSS.

This sequence belongs to the Casparian strip membrane proteins (CASP) family. Homodimer and heterodimers.

Its subcellular location is the cell membrane. Regulates membrane-cell wall junctions and localized cell wall deposition. Required for establishment of the Casparian strip membrane domain (CSD) and the subsequent formation of Casparian strips, a cell wall modification of the root endodermis that determines an apoplastic barrier between the intraorganismal apoplasm and the extraorganismal apoplasm and prevents lateral diffusion. The protein is Casparian strip membrane protein 1 of Striga asiatica (Asiatic witchweed).